Here is a 2067-residue protein sequence, read N- to C-terminus: Nuclear receptor coactivator 6 (2067 aa).

The TBP/GTF2A-binding region stretch occupies residues 1-932 (MVLDDLPNFE…PPRKKKNCHQ (932 aa)). The segment at 1–1060 (MVLDDLPNFE…LPVSQNVHPP (1060 aa)) is CREBBP-binding region. Residues 1–1314 (MVLDDLPNFE…QAHKLDSVVV (1314 aa)) form an NCOA1-binding region region. Arg95 bears the Asymmetric dimethylarginine mark. Disordered stretches follow at residues 181-253 (AVMT…RQMN) and 293-548 (TRPL…PGNS). Low complexity predominate over residues 293–304 (TRPLQQHQQQPQ). Polar residues-rich tracts occupy residues 338–347 (SLGTMTTNQG), 357–372 (MQAQ…TVQT), 383–405 (GSQQ…QFTA), 421–457 (PLQQ…QQQM), 465–506 (NPLS…QGPQ), and 526–548 (GQAN…PGNS). Positions 777–931 (VNNSPSQVMG…KPPRKKKNCH (155 aa)) are NCOA6IP-binding region. Ser888 bears the Phosphoserine mark. Residues 891–895 (LVNLL) carry the LXXLL motif 1 motif. Disordered stretches follow at residues 903 to 1279 (HFGV…QGLN), 1313 to 1358 (VVNS…APKL), 1424 to 1481 (NIPQ…EENK), 1497 to 1581 (QLLD…IPPV), and 1769 to 1822 (LNPD…GKGK). Positions 907-916 (NNKQNNTNAN) are enriched in low complexity. Basic residues predominate over residues 917 to 929 (KPKKKKPPRKKKN). Positions 984–996 (QRPLPQMPPQLMQ) are enriched in low complexity. Positions 999 to 1024 (APPPQPPQQQPQPQLPQQQQPPPPSQ) are enriched in pro residues. Residues 1025 to 1044 (PQSQQQQQQQQMMMMLMMQQ) show a composition bias toward low complexity. An asymmetric dimethylarginine mark is found at Arg1050 and Arg1061. Polar residues predominate over residues 1066-1078 (PDSQRMPVQQSGN). Arg1099 is modified (asymmetric dimethylarginine). A compositionally biased stretch (polar residues) spans 1103 to 1123 (SVNTPMGSNSRKMVYQENPQN). Low complexity predominate over residues 1124 to 1137 (SSSSPLGEMSSLPE). Polar residues-rich tracts occupy residues 1152–1165 (NMPS…NQLM), 1176–1194 (LSAT…SLPS), and 1205–1217 (APTQ…TPNR). The segment covering 1222-1235 (PYYPQTPNNRPPST) has biased composition (pro residues). The segment covering 1313–1324 (VVNSGKQSNPGT) has biased composition (polar residues). Over residues 1326–1349 (KRASPSNSRRSSPGSSRKTTPSPG) the composition is skewed to low complexity. Residues 1424–1435 (NIPQDSDCQNAQ) show a composition bias toward polar residues. An LXXLL motif 2 motif is present at residues 1495 to 1499 (LSQLL). Positions 1545-1562 (EPSTSLSSPHSSEPCSTL) are enriched in low complexity. An EP300/CRSP3-binding region region spans residues 1644–2067 (SEGQSAAQSN…AVQSKRRKSK (424 aa)). Over residues 1775–1805 (SPQTNTSADQSTLPPSQPTTVVSSLLTNSPG) the composition is skewed to polar residues. Residues 1806 to 1818 (SSANRRSPVSSSK) show a composition bias toward low complexity. N6-acetyllysine occurs at positions 1822 and 1825. 2 disordered regions span residues 1840-1911 (GSLE…LPGG) and 1957-2067 (VGSH…RKSK). Residues 1871 to 1883 (EQCSTELDSKTPT) show a composition bias toward polar residues. Residues 1892–1904 (MTSSPMAPSSTST) show a composition bias toward low complexity. Residues 2005–2014 (EPKEIVEKSK) show a composition bias toward basic and acidic residues. Ser2022 carries the post-translational modification Phosphoserine.

In terms of assembly, monomer and homodimer. Interacts in vitro with the basal transcription factors GTF2A and TBP, suggesting an autonomous transactivation function. Interacts with NCOA1, CRSP3, RBM14, the histone acetyltransferase proteins EP300 and CREBBP, and with methyltransferase proteins NCOA6IP and PRMT2. Interacts with RBM39. Component of the MLL2/3 complex (also named ASCOM complex), at least composed of KMT2D/MLL2 or KMT2C/MLL3, ASH2L, RBBP5, WDR5, NCOA6, DPY30, KDM6A, PAXIP1/PTIP, PAGR1 and alpha- and beta-tubulin. Interacts with ZNF335; may enhance ligand-dependent transcriptional activation by nuclear hormone receptors. Phosphorylated. In terms of tissue distribution, widely expressed. High expression in testis and weak expression in small intestine.

Its subcellular location is the nucleus. Functionally, nuclear receptor coactivator that directly binds nuclear receptors and stimulates the transcriptional activities in a hormone-dependent fashion. Coactivates expression in an agonist- and AF2-dependent manner. Involved in the coactivation of different nuclear receptors, such as for steroids (GR and ERs), retinoids (RARs and RXRs), thyroid hormone (TRs), vitamin D3 (VDR) and prostanoids (PPARs). Probably functions as a general coactivator, rather than just a nuclear receptor coactivator. May also be involved in the coactivation of the NF-kappa-B pathway. May coactivate expression via a remodeling of chromatin and its interaction with histone acetyltransferase proteins. Involved in placental, cardiac, hepatic and embryonic development. The polypeptide is Nuclear receptor coactivator 6 (Ncoa6) (Mus musculus (Mouse)).